Consider the following 517-residue polypeptide: ATP synthase subunit alpha (517 aa).

Residue 174-181 (GDRQTGKT) participates in ATP binding.

This sequence belongs to the ATPase alpha/beta chains family. F-type ATPases have 2 components, CF(1) - the catalytic core - and CF(0) - the membrane proton channel. CF(1) has five subunits: alpha(3), beta(3), gamma(1), delta(1), epsilon(1). CF(0) has four main subunits: a(1), b(1), b'(1) and c(9-12).

The protein localises to the cell inner membrane. The enzyme catalyses ATP + H2O + 4 H(+)(in) = ADP + phosphate + 5 H(+)(out). In terms of biological role, produces ATP from ADP in the presence of a proton gradient across the membrane. The alpha chain is a regulatory subunit. The protein is ATP synthase subunit alpha of Methylibium petroleiphilum (strain ATCC BAA-1232 / LMG 22953 / PM1).